A 121-amino-acid polypeptide reads, in one-letter code: Small ribosomal subunit protein bS21m (121 aa).

A mitochondrion-targeting transit peptide spans 1–14 (MNSSYFPGVLGVRW).

The protein belongs to the bacterial ribosomal protein bS21 family. Component of the mitochondrial small ribosomal subunit (mt-SSU). Mature yeast 74S mitochondrial ribosomes consist of a small (37S) and a large (54S) subunit. The 37S small subunit contains a 15S ribosomal RNA (15S mt-rRNA) and at least 32 different proteins. The 54S large subunit contains a 21S rRNA (21S mt-rRNA) and at least 45 different proteins.

The protein resides in the mitochondrion. In terms of biological role, component of the mitochondrial ribosome (mitoribosome), a dedicated translation machinery responsible for the synthesis of mitochondrial genome-encoded proteins, including at least some of the essential transmembrane subunits of the mitochondrial respiratory chain. The mitoribosomes are attached to the mitochondrial inner membrane and translation products are cotranslationally integrated into the membrane. The sequence is that of Small ribosomal subunit protein bS21m (mrp21) from Schizosaccharomyces pombe (strain 972 / ATCC 24843) (Fission yeast).